The chain runs to 139 residues: Ribonuclease P protein component (139 aa).

Positions 120–139 (KPTTGVEYSPKNEKCESVLP) are disordered. Over residues 129 to 139 (PKNEKCESVLP) the composition is skewed to basic and acidic residues.

The protein belongs to the RnpA family. Consists of a catalytic RNA component (M1 or rnpB) and a protein subunit.

The catalysed reaction is Endonucleolytic cleavage of RNA, removing 5'-extranucleotides from tRNA precursor.. In terms of biological role, RNaseP catalyzes the removal of the 5'-leader sequence from pre-tRNA to produce the mature 5'-terminus. It can also cleave other RNA substrates such as 4.5S RNA. The protein component plays an auxiliary but essential role in vivo by binding to the 5'-leader sequence and broadening the substrate specificity of the ribozyme. This Chlamydia caviae (strain ATCC VR-813 / DSM 19441 / 03DC25 / GPIC) (Chlamydophila caviae) protein is Ribonuclease P protein component.